We begin with the raw amino-acid sequence, 99 residues long: Cell division topological specificity factor (99 aa).

This sequence belongs to the MinE family.

Prevents the cell division inhibition by proteins MinC and MinD at internal division sites while permitting inhibition at polar sites. This ensures cell division at the proper site by restricting the formation of a division septum at the midpoint of the long axis of the cell. The sequence is that of Cell division topological specificity factor from Tolumonas auensis (strain DSM 9187 / NBRC 110442 / TA 4).